We begin with the raw amino-acid sequence, 710 residues long: Effector protein AvrPphD (710 aa).

Positions 1–15 (MNPLRSIQHNITTPP) are enriched in polar residues. Disordered regions lie at residues 1 to 36 (MNPL…HPKR), 136 to 155 (ISFD…SVLS), and 173 to 207 (SSSL…DSGS).

The protein resides in the secreted. Effector protein involved in non-host recognition and able to elicit hypersensitive response (HR). In Pseudomonas savastanoi pv. phaseolicola (Pseudomonas syringae pv. phaseolicola), this protein is Effector protein AvrPphD (avrPphD).